Here is a 351-residue protein sequence, read N- to C-terminus: C(7)-cyclitol 7-kinase (351 aa).

It belongs to the ROK (NagC/XylR) family.

The enzyme catalyses valienone + ATP = valienone 7-phosphate + ADP + H(+). The catalysed reaction is validone + ATP = validone 7-phosphate + ADP + H(+). In terms of biological role, involved in the biosynthesis of the antifungal agent validamycin A. Catalyzes the phosphorylation of valienone and validone to their 7-phosphate derivatives. This Streptomyces hygroscopicus subsp. limoneus protein is C(7)-cyclitol 7-kinase.